Here is a 152-residue protein sequence, read N- to C-terminus: uncharacterized protein (152 aa).

The 141-residue stretch at 3–143 folds into the HTH marR-type domain; sequence EQKLCQAINL…IIEIFTILKS (141 aa). The segment at residues 55–78 is a DNA-binding region (H-T-H motif); the sequence is PGSLAMYQNVHKSAISNRLKKLLE.

This is an uncharacterized protein from Bacillus subtilis (strain 168).